We begin with the raw amino-acid sequence, 80 residues long: Small membrane A-kinase anchor protein (80 aa).

Glycine 2 is lipidated: N-myristoyl glycine.

It belongs to the small membrane AKAP family. Post-translationally, may be palmitoylated at Cys-3.

The protein resides in the cell membrane. In terms of biological role, binds to type I regulatory subunits of protein kinase A and may anchor/target them to the plasma membrane. In Tetraodon nigroviridis (Spotted green pufferfish), this protein is Small membrane A-kinase anchor protein.